We begin with the raw amino-acid sequence, 220 residues long: Large ribosomal subunit protein uL1 (220 aa).

It belongs to the universal ribosomal protein uL1 family. Part of the 50S ribosomal subunit.

Binds directly to 23S rRNA. The L1 stalk is quite mobile in the ribosome, and is involved in E site tRNA release. Functionally, protein L1 is also a translational repressor protein, it controls the translation of the L11 operon by binding to its mRNA. The protein is Large ribosomal subunit protein uL1 of Ehrlichia chaffeensis (strain ATCC CRL-10679 / Arkansas).